Consider the following 215-residue polypeptide: Variable small protein 6 (215 aa).

An N-terminal signal peptide occupies residues 1 to 18 (MRKRISAIIMTLFMVFMS). A lipid anchor (N-palmitoyl cysteine) is attached at Cys19. Cys19 carries S-diacylglycerol cysteine lipidation.

This sequence belongs to the variable small protein (Vsp) family.

It is found in the cell outer membrane. Its function is as follows. The Vlp and Vsp proteins are antigenically distinct proteins, only one vlp or vsp gene is transcriptionally active at any one time. Switching between these genes is a mechanism of host immune response evasion. This Borrelia hermsii protein is Variable small protein 6.